Reading from the N-terminus, the 222-residue chain is MSVKDVNKRSGELEGKLKGKLFLGGTKPSKEDVKLFNDLLGAENTSLYLWVKHMTSFTEAERKAWGAPVKVTATTSASAPAKQAPKKAASAPAKQADEDEEIDLFGEATEEETAALEAKKKKDTDAKKAKKEVIAKSSILFDVKPWDDTVDLQALANKLHAVKRDGLLWGDHKLVPVAFGVKKLQQLIVIEDDKVLSDDLEELIMSFEDEVQSMDIVAWNKI.

The span at 75–94 (TSASAPAKQAPKKAASAPAK) shows a compositional bias: low complexity. The disordered stretch occupies residues 75-98 (TSASAPAKQAPKKAASAPAKQADE).

This sequence belongs to the EF-1-beta/EF-1-delta family. As to quaternary structure, EF-1 is composed of 4 subunits: alpha, beta, delta, and gamma.

Functionally, EF-1-beta and EF-1-delta stimulate the exchange of GDP bound to EF-1-alpha to GTP. This chain is 25 kDa elongation factor 1-beta, found in Trypanosoma cruzi.